The sequence spans 103 residues: Large ribosomal subunit protein bL21 (103 aa).

This sequence belongs to the bacterial ribosomal protein bL21 family. As to quaternary structure, part of the 50S ribosomal subunit. Contacts protein L20.

In terms of biological role, this protein binds to 23S rRNA in the presence of protein L20. In Wolinella succinogenes (strain ATCC 29543 / DSM 1740 / CCUG 13145 / JCM 31913 / LMG 7466 / NCTC 11488 / FDC 602W) (Vibrio succinogenes), this protein is Large ribosomal subunit protein bL21.